Reading from the N-terminus, the 366-residue chain is MLIWLVELSEYFKFLNLFRYITFRTGAALFTSALIVFLFGPTIINSLRIRQGKGQPIRADGPQTHFKKAGTPTMGGLMILAGIVGASLLWADLSNVYVVATLLVTLGFGAIGFYDDYLKVTKQSHMGFSGKARLGIEFVIAGIAVYFMMRTALASGIAGSTFGSSIAFPFFKDFMINIGIMFVVFGGFVIVGAGNAVNLTDGLDGLAIVPVMIAAASFGVIAYLAGNVVFANYLQINFVPGTGELAVVLGAVIGAGLGFLWFNAPPAAIFMGDTGSLALGGTIGTVAVATKHEIVMAIIGGLFVIETLSVIIQVGFFKMTGRRVFLMAPIHHHFEKKGWTESQVVIRFWIVAVGLAMLGLSTLKLR.

Transmembrane regions (helical) follow at residues 27-47 (AALFTSALIVFLFGPTIINSL), 71-91 (TPTMGGLMILAGIVGASLLWA), 93-113 (LSNVYVVATLLVTLGFGAIGF), 138-158 (FVIAGIAVYFMMRTALASGIA), 174-194 (FMINIGIMFVVFGGFVIVGAG), 205-225 (GLAIVPVMIAAASFGVIAYLA), 245-265 (LAVVLGAVIGAGLGFLWFNAP), 268-288 (AIFMGDTGSLALGGTIGTVAV), 294-314 (IVMAIIGGLFVIETLSVIIQV), and 343-363 (QVVIRFWIVAVGLAMLGLSTL).

It belongs to the glycosyltransferase 4 family. MraY subfamily. Requires Mg(2+) as cofactor.

The protein resides in the cell inner membrane. It carries out the reaction UDP-N-acetyl-alpha-D-muramoyl-L-alanyl-gamma-D-glutamyl-meso-2,6-diaminopimeloyl-D-alanyl-D-alanine + di-trans,octa-cis-undecaprenyl phosphate = di-trans,octa-cis-undecaprenyl diphospho-N-acetyl-alpha-D-muramoyl-L-alanyl-D-glutamyl-meso-2,6-diaminopimeloyl-D-alanyl-D-alanine + UMP. It participates in cell wall biogenesis; peptidoglycan biosynthesis. In terms of biological role, catalyzes the initial step of the lipid cycle reactions in the biosynthesis of the cell wall peptidoglycan: transfers peptidoglycan precursor phospho-MurNAc-pentapeptide from UDP-MurNAc-pentapeptide onto the lipid carrier undecaprenyl phosphate, yielding undecaprenyl-pyrophosphoryl-MurNAc-pentapeptide, known as lipid I. The protein is Phospho-N-acetylmuramoyl-pentapeptide-transferase of Rhizobium johnstonii (strain DSM 114642 / LMG 32736 / 3841) (Rhizobium leguminosarum bv. viciae).